The following is a 318-amino-acid chain: C1GALT1-specific chaperone 1 (318 aa).

Residues 1-6 (MLSESS) lie on the Cytoplasmic side of the membrane. Residues 7–26 (SFLKGVMLGSIFCALITMLG) traverse the membrane as a helical; Signal-anchor for type II membrane protein segment. At 27 to 318 (HIRIGHGSRM…FLPPNGSDND (292 aa)) the chain is on the lumenal side.

It belongs to the glycosyltransferase 31 family. Beta3-Gal-T subfamily. In terms of assembly, associates with core 1 beta-3-galactosyltransferase (C1GALT1), probably not with the soluble active form.

Its subcellular location is the membrane. Functionally, probable chaperone required for the generation of 1 O-glycan Gal-beta1-3GalNAc-alpha1-Ser/Thr (T antigen), which is a precursor for many extended O-glycans in glycoproteins. Probably acts as a specific molecular chaperone assisting the folding/stability of core 1 beta-3-galactosyltransferase (C1GALT1). The polypeptide is C1GALT1-specific chaperone 1 (C1GALT1C1) (Bos taurus (Bovine)).